The primary structure comprises 932 residues: Probable UDP-N-acetylglucosamine--peptide N-acetylglucosaminyltransferase SPINDLY (932 aa).

Positions 1–15 (MAWTEKDVENGKESD) are enriched in basic and acidic residues. The tract at residues 1–39 (MAWTEKDVENGKESDSLGNNGFLKGVQSSSDSKGSPVRI) is disordered. 11 TPR repeats span residues 48-81 (GKDAITYANILRSRNKFVDALAIYESVLQKDSGS), 82-115 (IESLIGKGICLQMQNMGRLAFESFAEAIKLDPQN), 116-149 (ACALTHCGILYKDEGRLVEAAESYQKALKADPSY), 157-190 (AIVLTDIGTSLKLAGNSQEGIQKYYEAIKIDSHY), 191-224 (APAYYNLGVVYSEMMQYDMALNCYEKAAIERPMY), 225-258 (AEAYCNMGVIYKNRGDLESAIACYERCLAVSPNF), 266-299 (AIALTDLGTKVKLEGDINQGVAYYKKALYYNWHY), 300-333 (ADAMYNLGVAYGEMLKFDMAIVFYELAFHFNPHC), 334-367 (AEACNNLGVIYKDRDNLDKAVECYQMALTIKPNF), 369-401 (QSLNNLGVVYTVQGKMDAAASMIEKAIIANPTY), and 402-435 (AEAYNNLGVLYRDAGNISLAIEAYEQCLKIDPDS). Positions 436-932 (RNAGQNRLLA…NQAGNPGKQS (497 aa)) are catalytic region. A disordered region spans residues 881–902 (VSPIEKTRISASKDGPIKENGF).

It belongs to the glycosyltransferase 41 family. O-GlcNAc transferase subfamily. Expressed in stems, leaves and flowers. Expressed during all stages of corolla maturation.

Its subcellular location is the nucleus. It carries out the reaction L-seryl-[protein] + UDP-N-acetyl-alpha-D-glucosamine = 3-O-(N-acetyl-beta-D-glucosaminyl)-L-seryl-[protein] + UDP + H(+). The catalysed reaction is L-threonyl-[protein] + UDP-N-acetyl-alpha-D-glucosamine = 3-O-(N-acetyl-beta-D-glucosaminyl)-L-threonyl-[protein] + UDP + H(+). It participates in protein modification; protein glycosylation. Functionally, probable O-linked N-acetylglucosamine transferase (OGT) involved in various processes such as gibberellin (GA) signaling pathway. OGTs catalyze the addition of nucleotide-activated sugars directly onto the polypeptide through O-glycosidic linkage with the hydroxyl of serine or threonine. Probably acts by adding O-linked sugars to yet unknown proteins. The polypeptide is Probable UDP-N-acetylglucosamine--peptide N-acetylglucosaminyltransferase SPINDLY (SPY) (Petunia hybrida (Petunia)).